The following is a 275-amino-acid chain: NAD kinase (275 aa).

Residue Asp-66 is the Proton acceptor of the active site. Residues 66–67, His-71, 135–136, Lys-146, Arg-163, Asp-165, and 176–181 contribute to the NAD(+) site; these read DG, NE, and TAYAMS.

This sequence belongs to the NAD kinase family. The cofactor is a divalent metal cation.

Its subcellular location is the cytoplasm. It carries out the reaction NAD(+) + ATP = ADP + NADP(+) + H(+). Involved in the regulation of the intracellular balance of NAD and NADP, and is a key enzyme in the biosynthesis of NADP. Catalyzes specifically the phosphorylation on 2'-hydroxyl of the adenosine moiety of NAD to yield NADP. In Methanosphaera stadtmanae (strain ATCC 43021 / DSM 3091 / JCM 11832 / MCB-3), this protein is NAD kinase.